We begin with the raw amino-acid sequence, 313 residues long: Olfactory receptor 5D18 (313 aa).

The Extracellular portion of the chain corresponds to 1-26 (MLLTDRNTSGTTFTLLGFSDYPELQV). N-linked (GlcNAc...) asparagine glycosylation occurs at Asn-7. Residues 27 to 47 (PLFLVFLAIYNVTVLGNIGLI) traverse the membrane as a helical segment. Topologically, residues 48-55 (VIIKINPK) are cytoplasmic. A helical transmembrane segment spans residues 56–76 (LHTPMYFFLSQLSFVDFCYSS). Topologically, residues 77–100 (IIAPKMLVNLVVKDRTISFLGCVV) are extracellular. The cysteines at positions 98 and 190 are disulfide-linked. The helical transmembrane segment at 101-121 (QFFFFCTFVVTESFLLAVMAY) threads the bilayer. At 122 to 140 (DRFVAICNPLLYTVNMSQK) the chain is on the cytoplasmic side. Residues 141-161 (LCVLLVVGSYAWGVSCSLELT) traverse the membrane as a helical segment. At 162–197 (CSALKLCFHGFNTINHFFCEFSSLLSLSCSDTYINQ) the chain is on the extracellular side. Residues 198–218 (WLLFFLATFNEISTLLIVLTS) traverse the membrane as a helical segment. Residues 219 to 238 (YAFIVVTILKMRSVSGRRKA) lie on the Cytoplasmic side of the membrane. A helical membrane pass occupies residues 239–259 (FSTCASHLTAITIFHGTILFL). Over 260–272 (YCVPNSKNSRHTV) the chain is Extracellular. A helical transmembrane segment spans residues 273–293 (KVASVFYTVVIPMLNPLIYSL). Residues 294 to 313 (RNKDVKDTVTEILDTKVFSY) are Cytoplasmic-facing.

The protein belongs to the G-protein coupled receptor 1 family.

The protein resides in the cell membrane. Functionally, odorant receptor. This Homo sapiens (Human) protein is Olfactory receptor 5D18 (OR5D18).